We begin with the raw amino-acid sequence, 128 residues long: MGIQGGSVLFGLLLVLAVFCHSGHSLQCYNCPNPTTDCKTAINCSSGFDTCLIARAGLQVYNQCWKFANCNFNDISTLLKESELQYFCCKKDLCNFNEQLENGGTSLSEKTVVLLVTLLLAAAWCLHP.

A signal peptide spans 1–25; that stretch reads MGIQGGSVLFGLLLVLAVFCHSGHS. The 83-residue stretch at 26-108 folds into the UPAR/Ly6 domain; it reads LQCYNCPNPT…QLENGGTSLS (83 aa). 5 cysteine pairs are disulfide-bonded: cysteine 28/cysteine 51, cysteine 31/cysteine 38, cysteine 44/cysteine 64, cysteine 70/cysteine 88, and cysteine 89/cysteine 94. Asparagine 43 is a glycosylation site (N-linked (GlcNAc...) asparagine). A lipid anchor (GPI-anchor amidated asparagine) is attached at asparagine 102. Positions 103–128 are cleaved as a propeptide — removed in mature form; it reads GGTSLSEKTVVLLVTLLLAAAWCLHP.

In terms of assembly, interacts with T-cell surface antigen CD2. N- and O-glycosylated.

Its subcellular location is the cell membrane. The protein localises to the secreted. In terms of biological role, potent inhibitor of the complement membrane attack complex (MAC) action, which protects self-cells from damage during complement activation. Acts by binding to the beta-haipins of C8 (C8A and C8B) components of the assembling MAC, forming an intermolecular beta-sheet that prevents incorporation of the multiple copies of C9 required for complete formation of the osmolytic pore. This is CD59 glycoprotein from Chlorocebus aethiops (Green monkey).